The chain runs to 74 residues: Large ribosomal subunit protein bL31 (74 aa).

This sequence belongs to the bacterial ribosomal protein bL31 family. Type A subfamily. As to quaternary structure, part of the 50S ribosomal subunit.

Its function is as follows. Binds the 23S rRNA. This chain is Large ribosomal subunit protein bL31, found in Phenylobacterium zucineum (strain HLK1).